The chain runs to 455 residues: Hexokinase-2 (455 aa).

The 443-residue stretch at 3-445 (ANFQQAVKKL…SGIGAALCAL (443 aa)) folds into the Hexokinase domain. The interval 57 to 195 (TGAETGDFLA…NLPIRIEAVI (139 aa)) is hexokinase small subdomain. 68–73 (DFGGTN) contacts ATP. Substrate contacts are provided by residues 144-145 (SY), 161-162 (TK), and 196-197 (ND). A hexokinase large subdomain region spans residues 196-434 (NDTVGTLVTR…KLISIGIAKD (239 aa)). Position 222 (threonine 222) interacts with ATP. Asparagine 225, glutamate 252, and glutamate 283 together coordinate substrate. Residues 288-289 (GM), 325-329 (TSVLS), and 400-404 (SLVEH) contribute to the ATP site.

It belongs to the hexokinase family. Monomer.

It catalyses the reaction a D-hexose + ATP = a D-hexose 6-phosphate + ADP + H(+). It carries out the reaction D-mannose + ATP = D-mannose 6-phosphate + ADP + H(+). The catalysed reaction is D-fructose + ATP = D-fructose 6-phosphate + ADP + H(+). The enzyme catalyses D-glucose + ATP = D-glucose 6-phosphate + ADP + H(+). It participates in carbohydrate metabolism; hexose metabolism. The protein operates within carbohydrate degradation; glycolysis; D-glyceraldehyde 3-phosphate and glycerone phosphate from D-glucose: step 1/4. In terms of biological role, catalyzes the phosphorylation of hexose (six-carbon sugars) to hexose 6-phosphate. Phosphorylates D-glucose, D-fructose and D-mannose. Compared to hxk1, has a much higher affinity for D-glucose. Constitutes the initial enzyme of glycolysis by catalyzing the phosphorylation of glucose to D-glucose 6-phosphate. In Schizosaccharomyces pombe (strain 972 / ATCC 24843) (Fission yeast), this protein is Hexokinase-2.